Reading from the N-terminus, the 614-residue chain is Leucine-rich repeat and immunoglobulin-like domain-containing nogo receptor-interacting protein 1 (614 aa).

The signal sequence occupies residues 1-35 (MLAGGVRSMPSPLLACWQPILLLVLGSVLSGSATG). 2 disulfide bridges follow: Cys36/Cys42 and Cys40/Cys51. Residues 36 to 65 (CPPRCECSAQDRAVLCHRKRFVAVPEGIPT) form the LRRNT domain. Residues 36 to 555 (CPPRCECSAQ…FDIKTLIIAT (520 aa)) are Extracellular-facing. LRR repeat units follow at residues 66 to 87 (ETRLLDLGKNRIKTLNQDEFAS), 90 to 111 (HLEELELNENIVSAVEPGAFNN), 114 to 135 (NLRTLGLRSNRLKLIPLGVFTG), 138 to 159 (NLTKLDISENKIVILLDYMFQD), 162 to 183 (NLKSLEVGDNDLVYISHRAFSG), 186 to 207 (SLEQLTLEKCNLTSIPTEALSH), 210 to 231 (GLIVLRLRHLNINAIRDYSFKR), 258 to 279 (NLTSLSITHCNLTAVPYLAVRH), 282 to 303 (YLRFLNLSYNPISTIEGSMLHE), 306 to 327 (RLQEIQLVGGQLAMVEPYAFRG), and 330 to 351 (YLRVLNVSGNQLTTLEESVFHS). N-linked (GlcNAc...) asparagine glycosylation occurs at Asn138. An N-linked (GlcNAc...) asparagine glycan is attached at Asn196. N-linked (GlcNAc...) asparagine glycans are attached at residues Asn258, Asn268, and Asn287. N-linked (GlcNAc...) asparagine glycosylation is present at Asn335. Positions 363–417 (NPLACDCRLLWVFRRRWRLNFNRQQPTCATPEFVQGKEFKDFPDVLLPNYFTCRR) constitute an LRRCT domain. 3 disulfide bridges follow: Cys367-Cys390, Cys369-Cys415, and Cys440-Cys491. An Ig-like C2-type domain is found at 405 to 507 (PDVLLPNYFT…GNDSMPAHLH (103 aa)). N-linked (GlcNAc...) asparagine glycosylation is found at Asn486 and Asn536. A helical membrane pass occupies residues 556-576 (TMGFISFLGVVLFCLVLLFLW). Over 577 to 614 (SRGKGNTKHNIEIEYVPRKSDAGISSADAPRKFNMKMI) the chain is Cytoplasmic. Phosphoserine is present on Ser596.

Homotetramer. Forms a ternary complex with RTN4R/NGFR and RTN4R/TNFRSF19. Interacts with NGRF, RTN4R and MYT1L. N-glycosylated. Contains predominantly high-mannose glycans.

It localises to the cell membrane. Its function is as follows. Functional component of the Nogo receptor signaling complex (RTN4R/NGFR) in RhoA activation responsible for some inhibition of axonal regeneration by myelin-associated factors. Is also an important negative regulator of oligodentrocyte differentiation and axonal myelination. Acts in conjunction with RTN4 and RTN4R in regulating neuronal precursor cell motility during cortical development. The protein is Leucine-rich repeat and immunoglobulin-like domain-containing nogo receptor-interacting protein 1 (LINGO1) of Macaca fascicularis (Crab-eating macaque).